A 271-amino-acid chain; its full sequence is MMSEPVRVAITGGSGRMGRTLIEAARQQPSILLGAAIERAGSTLIGVDAGELAGVGAMNVAITDSLDKVVDDFDILIDFTSPEASIVHTDWCARNGKAIVIGTTGFNHAQKEQISAYSESTPIVMAPNMAVGVNLMWKLLEVAAKVMGDYTDIEIIEGHHRYKKDAPSGTALKMGEVIAEALGRDLEKCAEYGREGITGERDRETIGFSTIRAGDLVGEHTAMFADIGERIEITHKASSRMTFANGAMRAASWLAEEDPGLYDMQQVLGLN.

NAD(+) contacts are provided by residues 12–17 (GGSGRM) and Glu38. An NADP(+)-binding site is contributed by Arg39. NAD(+) is bound by residues 102 to 104 (GTT) and 126 to 129 (APNM). His159 (proton donor/acceptor) is an active-site residue. (S)-2,3,4,5-tetrahydrodipicolinate is bound at residue His160. Residue Lys163 is the Proton donor of the active site. Residue 169 to 170 (GT) participates in (S)-2,3,4,5-tetrahydrodipicolinate binding.

It belongs to the DapB family.

Its subcellular location is the cytoplasm. The catalysed reaction is (S)-2,3,4,5-tetrahydrodipicolinate + NAD(+) + H2O = (2S,4S)-4-hydroxy-2,3,4,5-tetrahydrodipicolinate + NADH + H(+). It catalyses the reaction (S)-2,3,4,5-tetrahydrodipicolinate + NADP(+) + H2O = (2S,4S)-4-hydroxy-2,3,4,5-tetrahydrodipicolinate + NADPH + H(+). The protein operates within amino-acid biosynthesis; L-lysine biosynthesis via DAP pathway; (S)-tetrahydrodipicolinate from L-aspartate: step 4/4. Its function is as follows. Catalyzes the conversion of 4-hydroxy-tetrahydrodipicolinate (HTPA) to tetrahydrodipicolinate. The sequence is that of 4-hydroxy-tetrahydrodipicolinate reductase from Shewanella sediminis (strain HAW-EB3).